Reading from the N-terminus, the 1387-residue chain is DNA-directed RNA polymerase subunit beta (1387 aa).

It belongs to the RNA polymerase beta chain family. In terms of assembly, the RNAP catalytic core consists of 2 alpha, 1 beta, 1 beta' and 1 omega subunit. When a sigma factor is associated with the core the holoenzyme is formed, which can initiate transcription.

The enzyme catalyses RNA(n) + a ribonucleoside 5'-triphosphate = RNA(n+1) + diphosphate. Its function is as follows. DNA-dependent RNA polymerase catalyzes the transcription of DNA into RNA using the four ribonucleoside triphosphates as substrates. This chain is DNA-directed RNA polymerase subunit beta, found in Xanthomonas campestris pv. campestris (strain 8004).